We begin with the raw amino-acid sequence, 180 residues long: NADH-quinone oxidoreductase subunit I (180 aa).

4Fe-4S ferredoxin-type domains follow at residues 48–80 (IVLT…LQKA) and 90–119 (EFFR…LTPD). Residues C60, C63, C66, C70, C99, C102, C105, and C109 each contribute to the [4Fe-4S] cluster site.

The protein belongs to the complex I 23 kDa subunit family. NDH-1 is composed of 13 different subunits. Subunits NuoA, H, J, K, L, M, N constitute the membrane sector of the complex. [4Fe-4S] cluster serves as cofactor.

Its subcellular location is the cell inner membrane. The catalysed reaction is a quinone + NADH + 5 H(+)(in) = a quinol + NAD(+) + 4 H(+)(out). Functionally, NDH-1 shuttles electrons from NADH, via FMN and iron-sulfur (Fe-S) centers, to quinones in the respiratory chain. The immediate electron acceptor for the enzyme in this species is believed to be ubiquinone. Couples the redox reaction to proton translocation (for every two electrons transferred, four hydrogen ions are translocated across the cytoplasmic membrane), and thus conserves the redox energy in a proton gradient. This is NADH-quinone oxidoreductase subunit I from Sodalis glossinidius (strain morsitans).